A 1004-amino-acid chain; its full sequence is Centriolar coiled-coil protein of 110 kDa (1004 aa).

The tract at residues M1 to P221 is CEP97 binding. Residues E51–Q90 are a coiled coil. The segment at L64 to V82 is calmodulin-binding. Residues Q67 to V82 are required for interaction with CEP290. Disordered regions lie at residues P147–S194 and R239–M279. Residue S170 is modified to Phosphoserine. The span at S243 to R252 shows a compositional bias: low complexity. Over residues S253 to A276 the composition is skewed to basic and acidic residues. The interval E349 to D564 is interaction with CEP76. S364, S370, and S398 each carry phosphoserine. A disordered region spans residues G401–V433. Over residues E415 to V433 the composition is skewed to polar residues. Residue S550 is modified to Phosphoserine. A coiled-coil region spans residues Q641–D699. 2 calmodulin-binding regions span residues G773–K813 and V901–F916. The segment at L955–I1004 is disordered. Over residues Q970–V980 the composition is skewed to polar residues. A compositionally biased stretch (basic residues) spans T994–I1004.

Interacts with CALM1, CETN2, CEP76, CEP104, CEP290 and TALPID3. Interacts with CEP97. Seems to associate with discrete CETN2, CEP97 and CEP290-containing complexes. Interacts with NEURL4 and CCNF; these interactions are not mutually exclusive and both lead to CCP110 ubiquitination and proteasome-dependent degradation. Via its interaction with NEURL4, may indirectly interact with HERC2. Interacts with KIF24, leading to its recruitment to centrioles. Interacts with USP20 and USP33. Interacts with MPHOSPH9. Interacts (via N-terminal region) with ENKD1 (via central region); ENKD1 competes with CEP97 for binding to CCP110, destabilizing the interaction between CP110 and CEP97 which promotes the removal of CCP110 and CEP97 from the mother centriole and allows the initiation of ciliogenesis. Phosphorylated by CDKs. Post-translationally, ubiquitinated by the SCF(CCNF) during G2 phase, leading to its degradation by the proteasome and preventing centrosome reduplication. Deubiquitinated by USP33 in S and G2/M phase, leading to stabilize CCP110 during the period which centrioles duplicate and elongate. Ubiquitinated by the EDVP complex, leading to its degradation.

It is found in the cytoplasm. The protein resides in the cytoskeleton. Its subcellular location is the microtubule organizing center. It localises to the centrosome. The protein localises to the centriole. It is found in the cilium basal body. Its function is as follows. Necessary for centrosome duplication at different stages of procentriole formation. Acts as a key negative regulator of ciliogenesis in collaboration with CEP97 by capping the mother centriole thereby preventing cilia formation. Also involved in promoting ciliogenesis. May play a role in the assembly of the mother centriole subdistal appendages (SDA) thereby effecting the fusion of recycling endosomes to basal bodies during cilia formation. Required for correct spindle formation and has a role in regulating cytokinesis and genome stability via cooperation with CALM1 and CETN2. This is Centriolar coiled-coil protein of 110 kDa (Ccp110) from Mus musculus (Mouse).